Reading from the N-terminus, the 842-residue chain is ATP-binding cassette sub-family B member 6 (842 aa).

Topologically, residues 1–26 (MVTVGNYCEAEGPLGPAWAQNGLSPC) are lumenal. The tract at residues 1 to 205 (MVTVGNYCEA…SGGLFILGLW (205 aa)) is required for the lysosomal targeting. The segment at 1 to 236 (MVTVGNYCEA…RNQAQSTDRT (236 aa)) is required for ATPase activity. A disulfide bond links cysteine 8 and cysteine 26. Residues 27–47 (FFFTLVPSTLMALGALALVLV) traverse the membrane as a helical segment. Residues 48–72 (LPCRRRDVPSGTEELFWAADSRVAP) are Cytoplasmic-facing. The helical transmembrane segment at 73-93 (YALQLFLATLQVALPLAGLAG) threads the bilayer. The Lumenal segment spans residues 94 to 106 (RVGTARGVRLPGY). The helical transmembrane segment at 107–127 (LLLASMLGSLASACGLWLLVA) threads the bilayer. Residues 128-147 (ERRQARQSLAMGVWMKFRHS) are Cytoplasmic-facing. A helical membrane pass occupies residues 148–168 (SGLLLLWTVAFAAENLALVSW). Residues 169–185 (NSPQWWWARADLGQQVQ) lie on the Lumenal side of the membrane. The helical transmembrane segment at 186–206 (FGLWVLRYVISGGLFILGLWA) threads the bilayer. The Cytoplasmic segment spans residues 207–263 (PGLRPQSYTLRVHEADQDVERNQAQSTDRTSTWRDLGRKLRLLSSYLWPRGSPALQF). The helical transmembrane segment at 264 to 284 (IVLICLGLMGLDRALNVLVPI) threads the bilayer. One can recognise an ABC transmembrane type-1 domain in the interval 265-556 (VLICLGLMGL…FGTYYRMIQT (292 aa)). Over 285-305 (FYRDIVNLLTSKAPWSSLAWT) the chain is Lumenal. Residues 306 to 326 (VTTYVFLKFLQGGGTGSTGFV) traverse the membrane as a helical segment. Over 327–375 (SNLRTFLWIRVQQFTSRGVELRLFSHLHELSLRWHLGRRTGEVLRVVDR) the chain is Cytoplasmic. A helical transmembrane segment spans residues 376-396 (GTSSVTGLLSYLVFNIIPTLA). A topological domain (lumenal) is located at residue aspartate 397. Residues 398-418 (IIIGIIYFSMFFNAWFGLIVF) traverse the membrane as a helical segment. Over 419 to 499 (LCMSLYLFLT…SSASLVVLNQ (81 aa)) the chain is Cytoplasmic. Residues 500–520 (TQNLVIGLGLLAGSLLCAYFV) traverse the membrane as a helical segment. At 521–529 (SEQKLQVGD) the chain is on the lumenal side. Residues 530–550 (FVLFGTYITQLYMPLNWFGTY) form a helical membrane-spanning segment. At 551–842 (YRMIQTNFID…SEDSKPQDIA (292 aa)) the chain is on the cytoplasmic side. The ABC transporter domain occupies 590 to 824 (IEFENVHFSY…GGVYAEMWQL (235 aa)). Position 623-630 (623-630 (GPSGAGKS)) interacts with ATP.

This sequence belongs to the ABC transporter superfamily. ABCB family. Heavy Metal importer (TC 3.A.1.210) subfamily. As to quaternary structure, homodimer. N-glycosylated. In terms of tissue distribution, highly expressed in the liver, adrenal glands, and testis.

It localises to the cell membrane. Its subcellular location is the mitochondrion outer membrane. The protein resides in the endoplasmic reticulum membrane. The protein localises to the golgi apparatus membrane. It is found in the endosome membrane. It localises to the lysosome membrane. Its subcellular location is the late endosome membrane. The protein resides in the early endosome membrane. The protein localises to the secreted. It is found in the extracellular exosome. It localises to the mitochondrion. Its subcellular location is the endosome. The protein resides in the multivesicular body membrane. The protein localises to the melanosome membrane. The catalysed reaction is heme b(in) + ATP + H2O = heme b(out) + ADP + phosphate + H(+). It catalyses the reaction coproporphyrin III(in) + ATP + H2O = coproporphyrin III(out) + ADP + phosphate + H(+). The enzyme catalyses pheophorbide a(in) + ATP + H2O = pheophorbide a(out) + ADP + phosphate + H(+). It carries out the reaction coproporphyrinogen III(in) + ATP + H2O = coproporphyrinogen III(out) + ADP + phosphate + H(+). The catalysed reaction is protoporphyrin IX(in) + ATP + H2O = protoporphyrin IX(out) + ADP + phosphate + H(+). It catalyses the reaction coproporphyrin I(in) + ATP + H2O = coproporphyrin I(out) + ADP + phosphate + H(+). The enzyme catalyses uroporphyrin I(in) + ATP + H2O = uroporphyrin I(out) + ADP + phosphate + H(+). It carries out the reaction uroporphyrin III(in) + ATP + H2O = uroporphyrin III(out) + ADP + phosphate + H(+). Functionally, ATP-dependent transporter that catalyzes the transport of a broad-spectrum of porphyrins from the cytoplasm to the extracellular space through the plasma membrane or into the vesicle lumen. May also function as an ATP-dependent importer of porphyrins from the cytoplasm into the mitochondria, in turn may participate in the de novo heme biosynthesis regulation and in the coordination of heme and iron homeostasis during phenylhydrazine stress. May also play a key role in the early steps of melanogenesis producing PMEL amyloid fibrils. In vitro, it confers to cells a resistance to toxic metal such as arsenic and cadmium and against chemotherapeutics agent such as 5-fluorouracil, SN-38 and vincristin. In addition may play a role in the transition metal homeostasis. This is ATP-binding cassette sub-family B member 6 from Mesocricetus auratus (Golden hamster).